We begin with the raw amino-acid sequence, 118 residues long: Ferredoxin-thioredoxin reductase, catalytic chain (118 aa).

C56 lines the [4Fe-4S] cluster pocket. C58 acts as the Nucleophile in catalysis. A disulfide bridge links C58 with C88. The [4Fe-4S] cluster site is built by C75, C77, and C86.

The protein belongs to the ferredoxin thioredoxin reductase beta subunit family. In terms of assembly, heterodimer of subunit A (variable subunit) and subunit B (catalytic subunit). Heterodimeric FTR forms a complex with ferredoxin and thioredoxin. The cofactor is [4Fe-4S] cluster.

It catalyses the reaction [thioredoxin]-disulfide + 2 reduced [2Fe-2S]-[ferredoxin] + 2 H(+) = [thioredoxin]-dithiol + 2 oxidized [2Fe-2S]-[ferredoxin]. Catalytic subunit of the ferredoxin-thioredoxin reductase (FTR), which catalyzes the two-electron reduction of thioredoxins by the electrons provided by reduced ferredoxin. The sequence is that of Ferredoxin-thioredoxin reductase, catalytic chain from Synechocystis sp. (strain ATCC 27184 / PCC 6803 / Kazusa).